The primary structure comprises 641 residues: Phosphomethylpyrimidine synthase (641 aa).

Substrate is bound by residues asparagine 221, methionine 250, tyrosine 279, histidine 315, 335 to 337 (SRG), 376 to 379 (DGLR), and glutamate 415. Zn(2+) is bound at residue histidine 419. Residue tyrosine 442 participates in substrate binding. Histidine 483 contacts Zn(2+). Positions 563, 566, and 571 each coordinate [4Fe-4S] cluster.

This sequence belongs to the ThiC family. Homodimer. It depends on [4Fe-4S] cluster as a cofactor.

It carries out the reaction 5-amino-1-(5-phospho-beta-D-ribosyl)imidazole + S-adenosyl-L-methionine = 4-amino-2-methyl-5-(phosphooxymethyl)pyrimidine + CO + 5'-deoxyadenosine + formate + L-methionine + 3 H(+). The protein operates within cofactor biosynthesis; thiamine diphosphate biosynthesis. Catalyzes the synthesis of the hydroxymethylpyrimidine phosphate (HMP-P) moiety of thiamine from aminoimidazole ribotide (AIR) in a radical S-adenosyl-L-methionine (SAM)-dependent reaction. This is Phosphomethylpyrimidine synthase from Rhodopseudomonas palustris (strain TIE-1).